Reading from the N-terminus, the 365-residue chain is Flagellar P-ring protein (365 aa).

The N-terminal stretch at 1-19 (MIKFLSTFMLLLVTTVVQA) is a signal peptide.

The protein belongs to the FlgI family. The basal body constitutes a major portion of the flagellar organelle and consists of four rings (L,P,S, and M) mounted on a central rod.

The protein localises to the periplasm. It is found in the bacterial flagellum basal body. Functionally, assembles around the rod to form the L-ring and probably protects the motor/basal body from shearing forces during rotation. The chain is Flagellar P-ring protein from Escherichia fergusonii (strain ATCC 35469 / DSM 13698 / CCUG 18766 / IAM 14443 / JCM 21226 / LMG 7866 / NBRC 102419 / NCTC 12128 / CDC 0568-73).